Here is a 276-residue protein sequence, read N- to C-terminus: Large ribosomal subunit protein uL2 (276 aa).

The interval 223–276 is disordered; sequence GVAMNPVDHPHGGGEGRGKGHHPTSPWGLPTKGYKTRRGKRPSDKFIVRRRNEA. Composition is skewed to basic and acidic residues over residues 230-240 and 263-276; these read DHPHGGGEGRG and RPSDKFIVRRRNEA.

It belongs to the universal ribosomal protein uL2 family. As to quaternary structure, part of the 50S ribosomal subunit. Forms a bridge to the 30S subunit in the 70S ribosome.

In terms of biological role, one of the primary rRNA binding proteins. Required for association of the 30S and 50S subunits to form the 70S ribosome, for tRNA binding and peptide bond formation. It has been suggested to have peptidyltransferase activity; this is somewhat controversial. Makes several contacts with the 16S rRNA in the 70S ribosome. The polypeptide is Large ribosomal subunit protein uL2 (Thermotoga petrophila (strain ATCC BAA-488 / DSM 13995 / JCM 10881 / RKU-1)).